A 122-amino-acid chain; its full sequence is UPF0738 protein YjbL (122 aa).

Belongs to the UPF0738 family.

The sequence is that of UPF0738 protein YjbL (yjbL) from Bacillus subtilis (strain 168).